We begin with the raw amino-acid sequence, 625 residues long: Chaperone protein HtpG (625 aa).

The a; substrate-binding stretch occupies residues 1–341 (MERKEFKAES…SEDLSLNISR (341 aa)). The interval 342–551 (EMLQHDRQLK…EGEVSIEMEK (210 aa)) is b. A c region spans residues 552–625 (VLRAMPDNQN…FSNDICKVMA (74 aa)).

The protein belongs to the heat shock protein 90 family. Homodimer.

Its subcellular location is the cytoplasm. Functionally, molecular chaperone. Has ATPase activity. This is Chaperone protein HtpG from Halalkalibacterium halodurans (strain ATCC BAA-125 / DSM 18197 / FERM 7344 / JCM 9153 / C-125) (Bacillus halodurans).